The primary structure comprises 66 residues: Heat-stable enterotoxin (66 aa).

The first 19 residues, 1–19, serve as a signal peptide directing secretion; sequence MKKIVFVLVLMLSSFGTFG. The propeptide occupies 20 to 50; the sequence is QETASRQFGDAFSTPIAAEVNKKACDTELPP. 3 disulfides stabilise this stretch: cysteine 54–cysteine 59, cysteine 55–cysteine 63, and cysteine 58–cysteine 66.

Belongs to the heat-stable enterotoxin family.

Its subcellular location is the secreted. Functionally, toxin which activates the particulate form of guanylate cyclase and increases cyclic GMP levels within the host intestinal epithelial cells. The chain is Heat-stable enterotoxin (yst) from Yersinia kristensenii.